The primary structure comprises 193 residues: Xanthine phosphoribosyltransferase (193 aa).

2 residues coordinate xanthine: leucine 20 and asparagine 27. 129-133 (ANGKA) contributes to the 5-phospho-alpha-D-ribose 1-diphosphate binding site. Residue lysine 157 participates in xanthine binding.

The protein belongs to the purine/pyrimidine phosphoribosyltransferase family. Xpt subfamily. As to quaternary structure, homodimer.

Its subcellular location is the cytoplasm. The enzyme catalyses XMP + diphosphate = xanthine + 5-phospho-alpha-D-ribose 1-diphosphate. It participates in purine metabolism; XMP biosynthesis via salvage pathway; XMP from xanthine: step 1/1. In terms of biological role, converts the preformed base xanthine, a product of nucleic acid breakdown, to xanthosine 5'-monophosphate (XMP), so it can be reused for RNA or DNA synthesis. This chain is Xanthine phosphoribosyltransferase, found in Bifidobacterium longum (strain NCC 2705).